The chain runs to 193 residues: dITP/XTP pyrophosphatase (193 aa).

7 to 12 (SENENK) serves as a coordination point for substrate. The active-site Proton acceptor is D65. D65 is a Mg(2+) binding site. Substrate contacts are provided by residues S66, 144-147 (FGYD), K167, and 172-173 (HR).

The protein belongs to the HAM1 NTPase family. As to quaternary structure, homodimer. Mg(2+) serves as cofactor.

The catalysed reaction is XTP + H2O = XMP + diphosphate + H(+). It carries out the reaction dITP + H2O = dIMP + diphosphate + H(+). It catalyses the reaction ITP + H2O = IMP + diphosphate + H(+). Its function is as follows. Pyrophosphatase that catalyzes the hydrolysis of nucleoside triphosphates to their monophosphate derivatives, with a high preference for the non-canonical purine nucleotides XTP (xanthosine triphosphate), dITP (deoxyinosine triphosphate) and ITP. Seems to function as a house-cleaning enzyme that removes non-canonical purine nucleotides from the nucleotide pool, thus preventing their incorporation into DNA/RNA and avoiding chromosomal lesions. The polypeptide is dITP/XTP pyrophosphatase (Tropheryma whipplei (strain Twist) (Whipple's bacillus)).